The following is a 165-amino-acid chain: SsrA-binding protein (165 aa).

The segment at 141 to 165 is disordered; the sequence is KLHDKRQDEKRKQADREVKSALARY. The segment covering 145–159 has biased composition (basic and acidic residues); that stretch reads KRQDEKRKQADREVK.

It belongs to the SmpB family.

The protein localises to the cytoplasm. In terms of biological role, required for rescue of stalled ribosomes mediated by trans-translation. Binds to transfer-messenger RNA (tmRNA), required for stable association of tmRNA with ribosomes. tmRNA and SmpB together mimic tRNA shape, replacing the anticodon stem-loop with SmpB. tmRNA is encoded by the ssrA gene; the 2 termini fold to resemble tRNA(Ala) and it encodes a 'tag peptide', a short internal open reading frame. During trans-translation Ala-aminoacylated tmRNA acts like a tRNA, entering the A-site of stalled ribosomes, displacing the stalled mRNA. The ribosome then switches to translate the ORF on the tmRNA; the nascent peptide is terminated with the 'tag peptide' encoded by the tmRNA and targeted for degradation. The ribosome is freed to recommence translation, which seems to be the essential function of trans-translation. In Prochlorococcus marinus (strain MIT 9313), this protein is SsrA-binding protein.